A 736-amino-acid chain; its full sequence is RNA-binding protein RMD9-like, mitochondrial (736 aa).

3 disordered regions span residues 1-28 (MFRF…KTNS), 124-148 (PRRS…HPNT), and 566-618 (NRGI…GTPV). A mitochondrion-targeting transit peptide spans 1-79 (MFRFAQPANV…HFKNQFSSRN (79 aa)). Over residues 125 to 140 (RRSNMRNNGNNNMNNG) the composition is skewed to low complexity. Polar residues predominate over residues 566 to 578 (NRGISSSSPMSAV). A compositionally biased stretch (low complexity) spans 579-596 (NSLAPSTTNTPSPSLSPI). Positions 602 to 613 (LSSARNTPNKIW) are enriched in polar residues.

Belongs to the RMD9 family. As to quaternary structure, monomer. In terms of processing, phosphorylated. Phosphorylation promotes binding to RNA.

The protein localises to the mitochondrion inner membrane. May be involved in the processing or stability of mitochondrial mRNAs. This chain is RNA-binding protein RMD9-like, mitochondrial, found in Candida glabrata (strain ATCC 2001 / BCRC 20586 / JCM 3761 / NBRC 0622 / NRRL Y-65 / CBS 138) (Yeast).